The following is a 688-amino-acid chain: Eukaryotic translation initiation factor 3 subunit B (688 aa).

The disordered stretch occupies residues 1–43 (MLESERPERDMEEEGEESNEEEEEEGMSFSDPEGFEDDISDEE). 2 stretches are compositionally biased toward acidic residues: residues 10-26 (DMEE…EEEG) and 33-43 (EGFEDDISDEE). An RRM domain is found at 61 to 144 (SVIVVDNVPQ…HTFRVNLFTD (84 aa)). 8 WD repeats span residues 164 to 206 (KDFG…VPVE), 208 to 246 (RARW…QIQR), 248 to 293 (SHQG…NKRG), 297 to 335 (ESSA…LLDK), 338 to 373 (LKIT…TLMQ), 436 to 492 (EMKD…TIFW), 525 to 570 (AEHY…LQKN), and 635 to 680 (TYRE…FFVT). The stretch at 589–640 (SQDQIKQIKKDLKKYSKIFEQKDRLSQTKASKELIERRRAMMEEYKTYREMA) forms a coiled coil.

This sequence belongs to the eIF-3 subunit B family. As to quaternary structure, component of the eukaryotic translation initiation factor 3 (eIF-3) complex, which is composed of 13 subunits: eif3a, eif3b, eif3c, eif3d, eif3e, eif3f, eif3g, eif3h, eif3i, eif3j, eif3k, eif3l and eif3m.

The protein resides in the cytoplasm. It localises to the stress granule. In terms of biological role, RNA-binding component of the eukaryotic translation initiation factor 3 (eIF-3) complex, which is involved in protein synthesis of a specialized repertoire of mRNAs and, together with other initiation factors, stimulates binding of mRNA and methionyl-tRNAi to the 40S ribosome. The eIF-3 complex specifically targets and initiates translation of a subset of mRNAs involved in cell proliferation. The chain is Eukaryotic translation initiation factor 3 subunit B (eif3b) from Xenopus laevis (African clawed frog).